We begin with the raw amino-acid sequence, 447 residues long: MIKITKGLDLPIAGMPLQQISPAPAVKRVALLGEEYVGMRPAMAVKEGDRVKKGQILFEDKKIPGVCFTAPASGIVSAIHRGERRVLQSVVIDIEGNDAVAFTRYAADALAELPRDTVQQQLLASGQWTALRTRPFSKTPLPGSTPAAIFVNAMDTNPLAAEPQPIILAERAAFDAGLTVLTRLTDGKVHVCQPSGGKLGGHPLGQVCFNQFSGPHPAGLPGTHIHFLEPVSLNKQVWHLNYQDAIAIGKLFLDGELYCERIIALGGPQVTSPRLVKTTLGASLEDLLAGELQEGENRVISGSVLSGARAHGPHAFLGRFHLQVSVVKEGREKELFGWVMPGKEKFSITRTTLGHFFKRKRFHFSTDTNGGERAMVPIGNYERVMPLDILPTILLRDLLAGDTDSAQALGCLELDEEDLALCTYVCPGKYEYGPALRSVLTRIEQEG.

The protein belongs to the NqrA family. As to quaternary structure, composed of six subunits; NqrA, NqrB, NqrC, NqrD, NqrE and NqrF.

The enzyme catalyses a ubiquinone + n Na(+)(in) + NADH + H(+) = a ubiquinol + n Na(+)(out) + NAD(+). NQR complex catalyzes the reduction of ubiquinone-1 to ubiquinol by two successive reactions, coupled with the transport of Na(+) ions from the cytoplasm to the periplasm. NqrA to NqrE are probably involved in the second step, the conversion of ubisemiquinone to ubiquinol. This Klebsiella pneumoniae subsp. pneumoniae (strain ATCC 700721 / MGH 78578) protein is Na(+)-translocating NADH-quinone reductase subunit A.